Consider the following 303-residue polypeptide: MSDGIMHLLDPAPFGRVLPAMITPMKPNGDVDFDMAQTVAKQLVADGADGLVVNGTTGESPTTHMDEKVELVKAVKEVVDVPVISGAGSNDTAHTVRMVEQTQEAGADAVLVVCPYYSRPSQQGIFCHYQAVNESADKPIIVYDVPGRTGVRIALDTYVHLAELDHVKAVKDATGDIAGAVRKRMETGLTWYSGDDALYLPFLSIGAVGIISVVAHAAAKPMRELAEAFDRGDIAKAQGLANRIAPVIEAMNGTGFQAVMAKAALKVRGIMECTTMRLPNIGPNDEQIEVVRDGLRASGLIPE.

Thr57 provides a ligand contact to pyruvate. The active-site Proton donor/acceptor is the Tyr143. The active-site Schiff-base intermediate with substrate is the Lys171. Residue Ile211 participates in pyruvate binding.

It belongs to the DapA family. Homotetramer; dimer of dimers.

It localises to the cytoplasm. It carries out the reaction L-aspartate 4-semialdehyde + pyruvate = (2S,4S)-4-hydroxy-2,3,4,5-tetrahydrodipicolinate + H2O + H(+). It participates in amino-acid biosynthesis; L-lysine biosynthesis via DAP pathway; (S)-tetrahydrodipicolinate from L-aspartate: step 3/4. Catalyzes the condensation of (S)-aspartate-beta-semialdehyde [(S)-ASA] and pyruvate to 4-hydroxy-tetrahydrodipicolinate (HTPA). The polypeptide is 4-hydroxy-tetrahydrodipicolinate synthase (Bifidobacterium animalis subsp. lactis (strain AD011)).